A 254-amino-acid chain; its full sequence is Nickel import ATP-binding protein NikD (254 aa).

The ABC transporter domain occupies 2–241 (PQQIELRNIA…PKHAVTRSLV (240 aa)). 36–43 (GGSGSGKS) contributes to the ATP binding site.

The protein belongs to the ABC transporter superfamily. Nickel importer (TC 3.A.1.5.3) family. The complex is composed of two ATP-binding proteins (NikD and NikE), two transmembrane proteins (NikB and NikC) and a solute-binding protein (NikA).

The protein localises to the cell inner membrane. The catalysed reaction is Ni(2+)(out) + ATP + H2O = Ni(2+)(in) + ADP + phosphate + H(+). Part of the ABC transporter complex NikABCDE involved in nickel import. Responsible for energy coupling to the transport system. This is Nickel import ATP-binding protein NikD from Escherichia coli (strain UTI89 / UPEC).